The chain runs to 585 residues: Zinc finger protein 732 (585 aa).

The KRAB domain occupies 4 to 75; it reads LTFRDVAIEF…KIHETVAKHP (72 aa). Residues 141 to 163 form a C2H2-type 1; degenerate zinc finger; sequence FQCNVHVKVFSTFSNSNQRRIRH. The C2H2-type 2; degenerate zinc finger occupies 167-189; it reads KHFKECGKSFQKFSDLTQHQGIH. The C2H2-type 3; degenerate zinc-finger motif lies at 195-217; that stretch reads YTCEECGKDFKWYLIFNEYEIIH. Residues 223-244 form a C2H2-type 4 zinc finger; that stretch reads FTCEECGNIFTTSSNFAKHKVH. The segment at 250–272 adopts a C2H2-type 5; degenerate zinc-finger fold; sequence YKYEECGKAFNRSSTLTKHKRIH. 9 C2H2-type zinc fingers span residues 278–300, 306–328, 334–356, 362–384, 390–412, 418–440, 446–468, 474–496, and 502–524; these read FTCE…KKIH, YKCQ…NRIH, YTCE…KRIH, YKCE…KSIH, HKCE…KIIH, YKCE…KKIH, YRCE…KTIH, and YECE…KKIH. The segment at 530-552 adopts a C2H2-type 15; degenerate zinc-finger fold; the sequence is YRCEECGKAFRRSRVLNKYKTIH. The C2H2-type 16; degenerate zinc finger occupies 558–580; the sequence is PKCKGCGKAFKWSSYLNQHNKIY.

Belongs to the krueppel C2H2-type zinc-finger protein family.

It is found in the nucleus. In terms of biological role, may be involved in transcriptional regulation. The polypeptide is Zinc finger protein 732 (ZNF732) (Homo sapiens (Human)).